Consider the following 368-residue polypeptide: BTB/POZ and TAZ domain-containing protein 5 (368 aa).

A disordered region spans residues 1-25 (MENMDDFSPENVLAPPPPPPPMKKS). Residues 55–123 (ADVLIHTDDN…LYSSCYEKQD (69 aa)) form the BTB domain. The TAZ-type zinc finger occupies 233–324 (QTYTQLYEAM…SEQCKVPLCS (92 aa)). A caM-binding region spans residues 335–358 (RKDEKRWKLLVRNVLSTKRIGGSP).

In terms of assembly, interacts with CUL3A. Preferentially expressed in young leaves, roots and stems.

Its subcellular location is the cytoplasm. It participates in protein modification; protein ubiquitination. Functionally, may act as a substrate-specific adapter of an E3 ubiquitin-protein ligase complex (CUL3-RBX1-BTB) which mediates the ubiquitination and subsequent proteasomal degradation of target proteins. The chain is BTB/POZ and TAZ domain-containing protein 5 (BT5) from Arabidopsis thaliana (Mouse-ear cress).